The chain runs to 81 residues: Exodeoxyribonuclease 7 small subunit (81 aa).

This sequence belongs to the XseB family. As to quaternary structure, heterooligomer composed of large and small subunits.

The protein localises to the cytoplasm. It catalyses the reaction Exonucleolytic cleavage in either 5'- to 3'- or 3'- to 5'-direction to yield nucleoside 5'-phosphates.. Bidirectionally degrades single-stranded DNA into large acid-insoluble oligonucleotides, which are then degraded further into small acid-soluble oligonucleotides. The sequence is that of Exodeoxyribonuclease 7 small subunit from Pasteurella multocida (strain Pm70).